A 157-amino-acid polypeptide reads, in one-letter code: Protein Smg (157 aa).

This sequence belongs to the Smg family.

The protein is Protein Smg of Buchnera aphidicola subsp. Schizaphis graminum (strain Sg).